A 365-amino-acid chain; its full sequence is MRVLLAGGGTAGHTSPLLATADALRRLEPDVEITCLGTPRGLENKVVPEAGYPLELIPPVPLPRRPGADLLKVPFRLRAAVRATHAVLDRVRPDVVVGYGGYVSMPAYVATRKRGIPLVVHEQNTVPGLANRAGARFAQRVAVSFPDTPLRNAEYVGLPIRPMISGLDRAARRAEARAFFGLDPDRPTLLVTGGSQGARRLNQAVSAAAGALAATGVQVLHAQGKHGGADPQPGAEETGVPYVVVEYIDRMDLAYAAADLVICRAGANSVTEAAAVGLPAVFVPLPIGNGEQERNARPVIDAGGGILVKDADLTTDWVVGTVPPLVADAERLAAMGAAAAALIPRDADERLARIVLELGLGSSAR.

Residues 10 to 12 (TAG), asparagine 124, arginine 161, serine 195, isoleucine 248, and glutamine 292 contribute to the UDP-N-acetyl-alpha-D-glucosamine site.

This sequence belongs to the glycosyltransferase 28 family. MurG subfamily.

It localises to the cell membrane. The enzyme catalyses di-trans,octa-cis-undecaprenyl diphospho-N-acetyl-alpha-D-muramoyl-L-alanyl-D-glutamyl-meso-2,6-diaminopimeloyl-D-alanyl-D-alanine + UDP-N-acetyl-alpha-D-glucosamine = di-trans,octa-cis-undecaprenyl diphospho-[N-acetyl-alpha-D-glucosaminyl-(1-&gt;4)]-N-acetyl-alpha-D-muramoyl-L-alanyl-D-glutamyl-meso-2,6-diaminopimeloyl-D-alanyl-D-alanine + UDP + H(+). The protein operates within cell wall biogenesis; peptidoglycan biosynthesis. Cell wall formation. Catalyzes the transfer of a GlcNAc subunit on undecaprenyl-pyrophosphoryl-MurNAc-pentapeptide (lipid intermediate I) to form undecaprenyl-pyrophosphoryl-MurNAc-(pentapeptide)GlcNAc (lipid intermediate II). This is UDP-N-acetylglucosamine--N-acetylmuramyl-(pentapeptide) pyrophosphoryl-undecaprenol N-acetylglucosamine transferase from Nocardioides sp. (strain ATCC BAA-499 / JS614).